We begin with the raw amino-acid sequence, 208 residues long: Porimin (208 aa).

Residues 1–26 (MGLGARGAWAALLLGTLQVLALLGAA) form the signal peptide. Topologically, residues 27–166 (HESAAMAASA…EAKKGSKFDT (140 aa)) are extracellular. Over residues 42 to 57 (GLPHNSSANSTETLQH) the composition is skewed to polar residues. The segment at 42 to 125 (GLPHNSSANS…PKTTSVSQNT (84 aa)) is disordered. Asparagine 46, asparagine 50, asparagine 64, asparagine 68, asparagine 83, asparagine 96, and asparagine 106 each carry an N-linked (GlcNAc...) asparagine glycan. The segment covering 65-107 (ETSNSTVKPPTSVASDSSNTTVTTMKPTAASNTTTPGMVSTNM) has biased composition (polar residues). The segment covering 108 to 122 (TSTTLKSTPKTTSVS) has biased composition (low complexity). N-linked (GlcNAc...) asparagine glycosylation is found at asparagine 124 and asparagine 138. A helical transmembrane segment spans residues 167 to 187 (GSFVGGIVLTLGVLSILYIGC). Residues 188–208 (KMYYSRRGIRYRTIDEHDAII) are Cytoplasmic-facing.

It belongs to the CD164 family. In terms of tissue distribution, ubiquitous. Not expressed in ovary. Expressed in keratinocytes.

It localises to the membrane. Functionally, implicated in oncotic cell death, characterized by cell swelling, organelle swelling, vacuolization and increased membrane permeability. This is Porimin (TMEM123) from Homo sapiens (Human).